The following is an 838-amino-acid chain: V-type proton ATPase 116 kDa subunit a 1 (838 aa).

Residues 1–388 lie on the Cytoplasmic side of the membrane; it reads MGELFRSEEM…DAYGIGTYRE (388 aa). 2 positions are modified to phosphothreonine: T250 and T360. The residue at position 364 (Y364) is a Phosphotyrosine. The chain crosses the membrane as a helical span at residues 389–407; the sequence is INPAPYTVITFPFLFAVMF. Topologically, residues 408 to 409 are vacuolar; the sequence is GD. Residues 410 to 426 traverse the membrane as a helical segment; it reads FGHGILMTLFAVWMVLR. Topologically, residues 427–441 are cytoplasmic; the sequence is ESRILSQKNENEMFS. The helical transmembrane segment at 442–471 threads the bilayer; sequence MVFSGRYIILLMGLFSIYTGLIYNDCFSKS. The Vacuolar segment spans residues 472 to 535; sequence LNIFGSSWSV…ATNKLTFLNS (64 aa). A helical transmembrane segment spans residues 536–555; that stretch reads FKMKMSVILGIIHMLFGVSL. The Cytoplasmic portion of the chain corresponds to 556-573; the sequence is SLFNHIYFKKPLNIYFGF. Residues 574 to 594 form a helical membrane-spanning segment; sequence IPEIIFMSSLFGYLVILIFYK. Residues 595–639 lie on the Vacuolar side of the membrane; sequence WTAYDAHSSRNAPSLLIHFINMFLFSYPESGNAMLYSGQKGIQCF. A helical transmembrane segment spans residues 640 to 659; the sequence is LIVVAMLCVPWMLLFKPLIL. Topologically, residues 660 to 725 are cytoplasmic; that stretch reads RHQYLRKKHL…DTMVHQAIHT (66 aa). The helical transmembrane segment at 726-750 threads the bilayer; the sequence is IEYCLGCISNTASYLRLWALSLAHA. At 751 to 771 the chain is on the vacuolar side; the sequence is QLSEVLWTMVIHIGLHVRSLA. A helical membrane pass occupies residues 772–810; the sequence is GGLGLFFIFAAFATLTVAILLIMEGLSAFLHALRLHWVE. The Cytoplasmic portion of the chain corresponds to 811 to 838; sequence FQNKFYTGTGFKFLPFSFEHIREGKFDE.

It belongs to the V-ATPase 116 kDa subunit family. As to quaternary structure, V-ATPase is a heteromultimeric enzyme made up of two complexes: the ATP-hydrolytic V1 complex and the proton translocation V0 complex. The V1 complex consists of three catalytic AB heterodimers that form a heterohexamer, three peripheral stalks each consisting of EG heterodimers, one central rotor including subunits D and F, and the regulatory subunits C and H. The proton translocation complex V0 consists of the proton transport subunit a, a ring of proteolipid subunits c9c'', rotary subunit d, subunits e and f, and the accessory subunits ATP6AP1/Ac45 and ATP6AP2/PRR. Interacts with SPAAR. In terms of tissue distribution, expressed in brain (at protein level). As to expression, expressed in heart, kidney, liver, spleen, and to a lesser extent in brain.

It localises to the cytoplasmic vesicle. It is found in the clathrin-coated vesicle membrane. The protein resides in the secretory vesicle. The protein localises to the synaptic vesicle membrane. Its subcellular location is the melanosome. Functionally, subunit of the V0 complex of vacuolar(H+)-ATPase (V-ATPase), a multisubunit enzyme composed of a peripheral complex (V1) that hydrolyzes ATP and a membrane integral complex (V0) that translocates protons. V-ATPase is responsible for the acidification of various organelles, such as lysosomes, endosomes, the trans-Golgi network, and secretory granules, including synaptic vesicles. In certain cell types, can be exported to the plasma membrane, where it is involved in the acidification of the extracellular environment. Required for assembly and activity of the vacuolar ATPase. Through its action on compartment acidification, plays an essential role in neuronal development in terms of integrity and connectivity of neurons. The chain is V-type proton ATPase 116 kDa subunit a 1 (Atp6v0a1) from Rattus norvegicus (Rat).